The primary structure comprises 253 residues: Tryptophan synthase alpha chain (253 aa).

Residues Glu47 and Asp58 each act as proton acceptor in the active site.

Belongs to the TrpA family. In terms of assembly, tetramer of two alpha and two beta chains.

The enzyme catalyses (1S,2R)-1-C-(indol-3-yl)glycerol 3-phosphate + L-serine = D-glyceraldehyde 3-phosphate + L-tryptophan + H2O. Its pathway is amino-acid biosynthesis; L-tryptophan biosynthesis; L-tryptophan from chorismate: step 5/5. Functionally, the alpha subunit is responsible for the aldol cleavage of indoleglycerol phosphate to indole and glyceraldehyde 3-phosphate. This chain is Tryptophan synthase alpha chain, found in Lactococcus lactis subsp. cremoris (strain SK11).